The following is a 205-amino-acid chain: Putative 3-methyladenine DNA glycosylase (205 aa).

This sequence belongs to the DNA glycosylase MPG family.

This Bacillus anthracis (strain A0248) protein is Putative 3-methyladenine DNA glycosylase.